A 910-amino-acid polypeptide reads, in one-letter code: NADH-quinone oxidoreductase subunit G (910 aa).

The 2Fe-2S ferredoxin-type domain occupies 1–83 (MAKIYVDGKA…GTIISINDDT (83 aa)). [2Fe-2S] cluster-binding residues include Cys-34, Cys-45, Cys-48, and Cys-67. A 4Fe-4S His(Cys)3-ligated-type domain is found at 83–122 (TSKKFRSNIVELLLTNHPHDCPVCEEGGNCHLQDMTVMTT). 12 residues coordinate [4Fe-4S] cluster: His-99, Cys-103, Cys-106, Cys-112, Cys-151, Cys-154, Cys-157, Cys-201, Cys-228, Cys-231, Cys-235, and Cys-263. The 57-residue stretch at 221-277 (MQYAPGICQNCSIGCNISIGERYGEIRRIENRYHESINHYLICDLGRFGYSHTNLKN) folds into the 4Fe-4S Mo/W bis-MGD-type domain.

It belongs to the complex I 75 kDa subunit family. As to quaternary structure, composed of 13 different subunits. Subunits NuoCD, E, F, and G constitute the peripheral sector of the complex. Requires [2Fe-2S] cluster as cofactor. The cofactor is [4Fe-4S] cluster.

It carries out the reaction a quinone + NADH + 5 H(+)(in) = a quinol + NAD(+) + 4 H(+)(out). NDH-1 shuttles electrons from NADH, via FMN and iron-sulfur (Fe-S) centers, to quinones in the respiratory chain. Couples the redox reaction to proton translocation (for every two electrons transferred, four hydrogen ions are translocated across the cytoplasmic membrane), and thus conserves the redox energy in a proton gradient. This Buchnera aphidicola subsp. Schizaphis graminum (strain Sg) protein is NADH-quinone oxidoreductase subunit G (nuoG).